A 129-amino-acid polypeptide reads, in one-letter code: Histone H2A type 2-C (129 aa).

The segment at Met-1–Ala-22 is disordered. Position 2 is an N-acetylserine (Ser-2). Ser-2 bears the Phosphoserine; by RPS6KA5 mark. Arg-4 bears the Citrulline; alternate mark. Residue Arg-4 is modified to Symmetric dimethylarginine; by PRMT5; alternate. 2 positions are modified to N6-(2-hydroxyisobutyryl)lysine; alternate: Lys-6 and Lys-10. N6-acetyllysine; alternate is present on Lys-6. Residues Gln-7–Ser-19 are compositionally biased toward basic residues. At Lys-10 the chain carries N6-lactoyllysine; alternate. Lys-10 bears the N6-succinyllysine; alternate mark. Residues Lys-14 and Lys-16 each participate in a glycyl lysine isopeptide (Lys-Gly) (interchain with G-Cter in ubiquitin) cross-link. Lys-37 carries the N6-(2-hydroxyisobutyryl)lysine; alternate modification. Lys-37 carries the N6-(beta-hydroxybutyryl)lysine; alternate modification. N6-crotonyllysine; alternate is present on Lys-37. An N6-(2-hydroxyisobutyryl)lysine mark is found at Lys-75 and Lys-76. Lys-96 carries the post-translational modification N6-(2-hydroxyisobutyryl)lysine; alternate. At Lys-96 the chain carries N6-succinyllysine; alternate. Lys-96 carries the N6-glutaryllysine; alternate modification. Lys-100 is subject to N6-glutaryllysine. N5-methylglutamine is present on Gln-105. N6-(2-hydroxyisobutyryl)lysine; alternate is present on Lys-119. Residues Lys-119 and Lys-120 each carry the N6-crotonyllysine; alternate modification. N6-glutaryllysine; alternate is present on residues Lys-119 and Lys-120. Lys-120 participates in a covalent cross-link: Glycyl lysine isopeptide (Lys-Gly) (interchain with G-Cter in ubiquitin); alternate. Thr-121 is subject to Phosphothreonine; by DCAF1. Residue Ser-123 is modified to Phosphoserine. Lys-125 is modified (N6-crotonyllysine).

This sequence belongs to the histone H2A family. The nucleosome is a histone octamer containing two molecules each of H2A, H2B, H3 and H4 assembled in one H3-H4 heterotetramer and two H2A-H2B heterodimers. The octamer wraps approximately 147 bp of DNA. Post-translationally, deiminated on Arg-4 in granulocytes upon calcium entry. Monoubiquitination of Lys-120 (H2AK119Ub) by RING1, TRIM37 and RNF2/RING2 complex gives a specific tag for epigenetic transcriptional repression and participates in X chromosome inactivation of female mammals. It is involved in the initiation of both imprinted and random X inactivation. Ubiquitinated H2A is enriched in inactive X chromosome chromatin. Ubiquitination of H2A functions downstream of methylation of 'Lys-27' of histone H3 (H3K27me). H2AK119Ub by RNF2/RING2 can also be induced by ultraviolet and may be involved in DNA repair. Following DNA double-strand breaks (DSBs), it is ubiquitinated through 'Lys-63' linkage of ubiquitin moieties by the E2 ligase UBE2N and the E3 ligases RNF8 and RNF168, leading to the recruitment of repair proteins to sites of DNA damage. Ubiquitination at Lys-14 and Lys-16 (H2AK13Ub and H2AK15Ub, respectively) in response to DNA damage is initiated by RNF168 that mediates monoubiquitination at these 2 sites, and 'Lys-63'-linked ubiquitin are then conjugated to monoubiquitin; RNF8 is able to extend 'Lys-63'-linked ubiquitin chains in vitro. H2AK119Ub and ionizing radiation-induced 'Lys-63'-linked ubiquitination (H2AK13Ub and H2AK15Ub) are distinct events. In terms of processing, phosphorylation on Ser-2 (H2AS1ph) is enhanced during mitosis. Phosphorylation on Ser-2 by RPS6KA5/MSK1 directly represses transcription. Acetylation of H3 inhibits Ser-2 phosphorylation by RPS6KA5/MSK1. Phosphorylation at Thr-121 (H2AT120ph) by DCAF1 is present in the regulatory region of many tumor suppresor genes and down-regulates their transcription. Post-translationally, symmetric dimethylation on Arg-4 by the PRDM1/PRMT5 complex may play a crucial role in the germ-cell lineage. Glutamine methylation at Gln-105 (H2AQ104me) by FBL is specifically dedicated to polymerase I. It is present at 35S ribosomal DNA locus and impairs binding of the FACT complex. In terms of processing, crotonylation (Kcr) is specifically present in male germ cells and marks testis-specific genes in post-meiotic cells, including X-linked genes that escape sex chromosome inactivation in haploid cells. Crotonylation marks active promoters and enhancers and confers resistance to transcriptional repressors. It is also associated with post-meiotically activated genes on autosomes. Post-translationally, lactylated in macrophages by EP300/P300 by using lactoyl-CoA directly derived from endogenous or exogenous lactate, leading to stimulates gene transcription.

It localises to the nucleus. Its subcellular location is the chromosome. Functionally, core component of nucleosome. Nucleosomes wrap and compact DNA into chromatin, limiting DNA accessibility to the cellular machineries which require DNA as a template. Histones thereby play a central role in transcription regulation, DNA repair, DNA replication and chromosomal stability. DNA accessibility is regulated via a complex set of post-translational modifications of histones, also called histone code, and nucleosome remodeling. In Bos taurus (Bovine), this protein is Histone H2A type 2-C.